The primary structure comprises 98 residues: Ubiquitin-related modifier 1 (98 aa).

Glycine 98 is modified (1-thioglycine). Glycine 98 participates in a covalent cross-link: Glycyl lysine isopeptide (Gly-Lys) (interchain with K-? in acceptor proteins).

Belongs to the URM1 family. C-terminal thiocarboxylation occurs in 2 steps, it is first acyl-adenylated (-COAMP) via the hesA/moeB/thiF part of UBA4, then thiocarboxylated (-COSH) via the rhodanese domain of UBA4.

The protein localises to the cytoplasm. It functions in the pathway tRNA modification; 5-methoxycarbonylmethyl-2-thiouridine-tRNA biosynthesis. Its function is as follows. Acts as a sulfur carrier required for 2-thiolation of mcm(5)S(2)U at tRNA wobble positions of cytosolic tRNA(Lys), tRNA(Glu) and tRNA(Gln). Serves as sulfur donor in tRNA 2-thiolation reaction by being thiocarboxylated (-COSH) at its C-terminus by the MOCS3 homolog UBA4. The sulfur is then transferred to tRNA to form 2-thiolation of mcm(5)S(2)U. Prior mcm(5) tRNA modification by the elongator complex is required for 2-thiolation. Also acts as a ubiquitin-like protein (UBL) that is covalently conjugated via an isopeptide bond to lysine residues of target proteins such as AHP1. The thiocarboxylated form serves as substrate for conjugation and oxidative stress specifically induces the formation of UBL-protein conjugates. The chain is Ubiquitin-related modifier 1 from Candida glabrata (strain ATCC 2001 / BCRC 20586 / JCM 3761 / NBRC 0622 / NRRL Y-65 / CBS 138) (Yeast).